The chain runs to 190 residues: Large ribosomal subunit protein uL5 (190 aa).

It belongs to the universal ribosomal protein uL5 family. In terms of assembly, part of the 50S ribosomal subunit; part of the 5S rRNA/L5/L18/L25 subcomplex. Contacts the 5S rRNA and the P site tRNA. Forms a bridge to the 30S subunit in the 70S ribosome.

Functionally, this is one of the proteins that bind and probably mediate the attachment of the 5S RNA into the large ribosomal subunit, where it forms part of the central protuberance. In the 70S ribosome it contacts protein S13 of the 30S subunit (bridge B1b), connecting the 2 subunits; this bridge is implicated in subunit movement. Contacts the P site tRNA; the 5S rRNA and some of its associated proteins might help stabilize positioning of ribosome-bound tRNAs. This is Large ribosomal subunit protein uL5 from Corynebacterium efficiens (strain DSM 44549 / YS-314 / AJ 12310 / JCM 11189 / NBRC 100395).